A 303-amino-acid chain; its full sequence is Zinc import ATP-binding protein ZnuC (303 aa).

In terms of domain architecture, ABC transporter spans 17 to 232 (VSLENVGVLR…PEYVRLFGSR (216 aa)). ATP is bound at residue 49-56 (GPNGSGKS). The segment at 263–303 (DHCHPDDGHHAHEHGHAGHEHDHDHPDHAHPHAHEAGERHA) is disordered.

The protein belongs to the ABC transporter superfamily. Zinc importer (TC 3.A.1.15.5) family. As to quaternary structure, the complex is composed of two ATP-binding proteins (ZnuC), two transmembrane proteins (ZnuB) and a solute-binding protein (ZnuA).

It localises to the cell inner membrane. It catalyses the reaction Zn(2+)(out) + ATP(in) + H2O(in) = Zn(2+)(in) + ADP(in) + phosphate(in) + H(+)(in). Its function is as follows. Part of the ABC transporter complex ZnuABC involved in zinc import. Responsible for energy coupling to the transport system. This chain is Zinc import ATP-binding protein ZnuC, found in Rhizobium johnstonii (strain DSM 114642 / LMG 32736 / 3841) (Rhizobium leguminosarum bv. viciae).